The following is a 323-amino-acid chain: Formimidoylglutamase (323 aa).

Mn(2+) is bound by residues His-131, Asp-157, His-159, Asp-161, Cys-245, and Asp-247.

The protein belongs to the arginase family. It depends on Mn(2+) as a cofactor.

It carries out the reaction N-formimidoyl-L-glutamate + H2O = formamide + L-glutamate. It functions in the pathway amino-acid degradation; L-histidine degradation into L-glutamate; L-glutamate from N-formimidoyl-L-glutamate (hydrolase route): step 1/1. Catalyzes the conversion of N-formimidoyl-L-glutamate to L-glutamate and formamide. The protein is Formimidoylglutamase of Geobacillus kaustophilus (strain HTA426).